The following is a 65-amino-acid chain: Small ribosomal subunit protein bS21 (65 aa).

The interval 39 to 65 (EKPSIKRKKKAIAARKRALKKQRKMMD) is disordered. Positions 43–65 (IKRKKKAIAARKRALKKQRKMMD) are enriched in basic residues.

Belongs to the bacterial ribosomal protein bS21 family.

This Pelobacter propionicus (strain DSM 2379 / NBRC 103807 / OttBd1) protein is Small ribosomal subunit protein bS21.